A 396-amino-acid chain; its full sequence is Tryptophan synthase beta chain (396 aa).

The residue at position 86 (Lys86) is an N6-(pyridoxal phosphate)lysine.

Belongs to the TrpB family. Tetramer of two alpha and two beta chains. Pyridoxal 5'-phosphate serves as cofactor.

It catalyses the reaction (1S,2R)-1-C-(indol-3-yl)glycerol 3-phosphate + L-serine = D-glyceraldehyde 3-phosphate + L-tryptophan + H2O. It participates in amino-acid biosynthesis; L-tryptophan biosynthesis; L-tryptophan from chorismate: step 5/5. The beta subunit is responsible for the synthesis of L-tryptophan from indole and L-serine. This Serratia proteamaculans (strain 568) protein is Tryptophan synthase beta chain.